A 615-amino-acid chain; its full sequence is Zinc metalloproteinase-disintegrin-like (615 aa).

The signal sequence occupies residues 1-20; it reads MIQALLVTICLVGFPHQGSS. Residues 21–195 constitute a propeptide that is removed on maturation; sequence IILESGNVKD…KMNFQSANNP (175 aa). The region spanning 204–400 is the Peptidase M12B domain; it reads KYIKLAVVVD…DLPQCILNKP (197 aa). 3 cysteine pairs are disulfide-bonded: cysteine 315-cysteine 395, cysteine 355-cysteine 379, and cysteine 357-cysteine 362. Position 340 (histidine 340) interacts with Zn(2+). Glutamate 341 is a catalytic residue. Zn(2+) contacts are provided by histidine 344 and histidine 350. Positions 408–494 constitute a Disintegrin domain; that stretch reads PAVCGNNFVE…DCPMDGLQRN (87 aa). Ca(2+) is bound by residues valine 410, asparagine 413, phenylalanine 415, glutamate 417, and aspartate 423. 14 disulfides stabilise this stretch: cysteine 411–cysteine 440, cysteine 422–cysteine 435, cysteine 424–cysteine 430, cysteine 434–cysteine 457, cysteine 448–cysteine 454, cysteine 453–cysteine 479, cysteine 466–cysteine 486, cysteine 473–cysteine 505, cysteine 498–cysteine 510, cysteine 517–cysteine 567, cysteine 532–cysteine 576, cysteine 545–cysteine 555, cysteine 562–cysteine 602, and cysteine 596–cysteine 608. A D/ECD-tripeptide motif is present at residues 472-474; that stretch reads DCD.

Belongs to the venom metalloproteinase (M12B) family. P-III subfamily. P-IIIa sub-subfamily. As to quaternary structure, monomer. Zn(2+) serves as cofactor. In terms of tissue distribution, expressed by the venom gland.

The protein localises to the secreted. In terms of biological role, snake venom zinc metalloprotease that may induce platelet aggregation. This chain is Zinc metalloproteinase-disintegrin-like, found in Cerberus rynchops (Dog-faced water snake).